Consider the following 257-residue polypeptide: Imidazole glycerol phosphate synthase subunit HisF (257 aa).

Active-site residues include Asp-11 and Asp-130.

It belongs to the HisA/HisF family. As to quaternary structure, heterodimer of HisH and HisF.

It localises to the cytoplasm. The enzyme catalyses 5-[(5-phospho-1-deoxy-D-ribulos-1-ylimino)methylamino]-1-(5-phospho-beta-D-ribosyl)imidazole-4-carboxamide + L-glutamine = D-erythro-1-(imidazol-4-yl)glycerol 3-phosphate + 5-amino-1-(5-phospho-beta-D-ribosyl)imidazole-4-carboxamide + L-glutamate + H(+). The protein operates within amino-acid biosynthesis; L-histidine biosynthesis; L-histidine from 5-phospho-alpha-D-ribose 1-diphosphate: step 5/9. In terms of biological role, IGPS catalyzes the conversion of PRFAR and glutamine to IGP, AICAR and glutamate. The HisF subunit catalyzes the cyclization activity that produces IGP and AICAR from PRFAR using the ammonia provided by the HisH subunit. This chain is Imidazole glycerol phosphate synthase subunit HisF, found in Shewanella piezotolerans (strain WP3 / JCM 13877).